A 44-amino-acid chain; its full sequence is Capsid protein G8P (44 aa).

The residue at position 1 (S1) is an N-acetylserine; by host. Residues 1 to 19 (SGVGDGVDVVSAIEGAAGP) are Periplasmic-facing. Residues 20 to 37 (IAAIGGAVLTVMVGIKVY) form a helical membrane-spanning segment. Residues 38–44 (KWVRRAM) lie on the Cytoplasmic side of the membrane.

It belongs to the inovirus capsid protein family. Homomultimerizes. There are several thousands of this protein in the phage capsid.

It localises to the virion. It is found in the host membrane. Self assembles to form a helical capsid wrapping up the viral genomic DNA. The capsid displays a filamentous structure with a length of 760-1950 nm and a width of 6-8 nm. The virion assembly and budding take place at the host inner membrane. The sequence is that of Capsid protein G8P (VIII) from Xanthomonas campestris pv. oryzae (Bacteriophage Xf).